The following is a 245-amino-acid chain: Ribonuclease PH (245 aa).

Residues arginine 87 and 125 to 127 contribute to the phosphate site; that span reads GTR.

The protein belongs to the RNase PH family. As to quaternary structure, homohexameric ring arranged as a trimer of dimers.

The enzyme catalyses tRNA(n+1) + phosphate = tRNA(n) + a ribonucleoside 5'-diphosphate. In terms of biological role, phosphorolytic 3'-5' exoribonuclease that plays an important role in tRNA 3'-end maturation. Removes nucleotide residues following the 3'-CCA terminus of tRNAs; can also add nucleotides to the ends of RNA molecules by using nucleoside diphosphates as substrates, but this may not be physiologically important. Probably plays a role in initiation of 16S rRNA degradation (leading to ribosome degradation) during starvation. In Streptomyces griseus subsp. griseus (strain JCM 4626 / CBS 651.72 / NBRC 13350 / KCC S-0626 / ISP 5235), this protein is Ribonuclease PH.